Consider the following 488-residue polypeptide: B-type flagellin (488 aa).

Belongs to the bacterial flagellin family. Phosphorylated on tyrosine residue(s).

It localises to the secreted. The protein localises to the bacterial flagellum. Functionally, flagellin is the subunit protein which polymerizes to form the filaments of bacterial flagella. The chain is B-type flagellin (fliC) from Pseudomonas aeruginosa (strain ATCC 15692 / DSM 22644 / CIP 104116 / JCM 14847 / LMG 12228 / 1C / PRS 101 / PAO1).